The primary structure comprises 763 residues: uncharacterized protein (763 aa).

The 228-residue stretch at 380–607 folds into the TR mART core domain; that stretch reads DSVLNPFNTN…YNIKVITMRL (228 aa). The helical transmembrane segment at 684–700 threads the bilayer; the sequence is SYVSIYALLCPLLTNIY.

The protein resides in the membrane. This is an uncharacterized protein from Acanthamoeba polyphaga mimivirus (APMV).